The chain runs to 614 residues: Phosphomethylpyrimidine synthase (614 aa).

Substrate contacts are provided by residues Asn-230, Met-259, Tyr-288, His-324, 344-346 (SRG), 385-388 (DGLR), and Glu-424. His-428 contributes to the Zn(2+) binding site. Tyr-451 contacts substrate. Residue His-492 participates in Zn(2+) binding. [4Fe-4S] cluster is bound by residues Cys-572, Cys-575, and Cys-580.

Belongs to the ThiC family. In terms of assembly, homodimer. The cofactor is [4Fe-4S] cluster.

It catalyses the reaction 5-amino-1-(5-phospho-beta-D-ribosyl)imidazole + S-adenosyl-L-methionine = 4-amino-2-methyl-5-(phosphooxymethyl)pyrimidine + CO + 5'-deoxyadenosine + formate + L-methionine + 3 H(+). It participates in cofactor biosynthesis; thiamine diphosphate biosynthesis. Its function is as follows. Catalyzes the synthesis of the hydroxymethylpyrimidine phosphate (HMP-P) moiety of thiamine from aminoimidazole ribotide (AIR) in a radical S-adenosyl-L-methionine (SAM)-dependent reaction. The sequence is that of Phosphomethylpyrimidine synthase from Stenotrophomonas maltophilia (strain K279a).